Reading from the N-terminus, the 339-residue chain is Tetraacyldisaccharide 4'-kinase (339 aa).

58–65 (TVGGSGKT) is a binding site for ATP.

It belongs to the LpxK family.

It carries out the reaction a lipid A disaccharide + ATP = a lipid IVA + ADP + H(+). It participates in glycolipid biosynthesis; lipid IV(A) biosynthesis; lipid IV(A) from (3R)-3-hydroxytetradecanoyl-[acyl-carrier-protein] and UDP-N-acetyl-alpha-D-glucosamine: step 6/6. In terms of biological role, transfers the gamma-phosphate of ATP to the 4'-position of a tetraacyldisaccharide 1-phosphate intermediate (termed DS-1-P) to form tetraacyldisaccharide 1,4'-bis-phosphate (lipid IVA). The sequence is that of Tetraacyldisaccharide 4'-kinase from Shewanella baltica (strain OS185).